A 338-amino-acid polypeptide reads, in one-letter code: UPF0324 membrane protein TauZ (338 aa).

9 helical membrane passes run 36-55, 75-92, 96-118, 125-147, 162-184, 223-245, 255-277, 290-309, and 314-336; these read YGAP…NFLA, LGVA…LAAL, AIAL…SRLV, ALLT…AAVL, LSVT…LFGF, LIRV…ARGL, PLLP…GLIP, WALL…GKML, and GAIA…GLHL.

Belongs to the UPF0324 family.

The protein resides in the cell membrane. This is UPF0324 membrane protein TauZ (tauZ) from Paracoccus pantotrophus (Thiosphaera pantotropha).